The sequence spans 276 residues: Formamidopyrimidine-DNA glycosylase (276 aa).

Pro-2 acts as the Schiff-base intermediate with DNA in catalysis. Glu-3 (proton donor) is an active-site residue. The Proton donor; for beta-elimination activity role is filled by Lys-60. DNA-binding residues include His-93, Arg-112, and Arg-155. An FPG-type zinc finger spans residues 240–274; the sequence is LVYGRKDEACTKCGAEIIRFVVGGRGTHICPDCQK. Catalysis depends on Arg-264, which acts as the Proton donor; for delta-elimination activity.

This sequence belongs to the FPG family. In terms of assembly, monomer. Zn(2+) is required as a cofactor.

It carries out the reaction Hydrolysis of DNA containing ring-opened 7-methylguanine residues, releasing 2,6-diamino-4-hydroxy-5-(N-methyl)formamidopyrimidine.. The catalysed reaction is 2'-deoxyribonucleotide-(2'-deoxyribose 5'-phosphate)-2'-deoxyribonucleotide-DNA = a 3'-end 2'-deoxyribonucleotide-(2,3-dehydro-2,3-deoxyribose 5'-phosphate)-DNA + a 5'-end 5'-phospho-2'-deoxyribonucleoside-DNA + H(+). Functionally, involved in base excision repair of DNA damaged by oxidation or by mutagenic agents. Acts as a DNA glycosylase that recognizes and removes damaged bases. Has a preference for oxidized purines, such as 7,8-dihydro-8-oxoguanine (8-oxoG). Has AP (apurinic/apyrimidinic) lyase activity and introduces nicks in the DNA strand. Cleaves the DNA backbone by beta-delta elimination to generate a single-strand break at the site of the removed base with both 3'- and 5'-phosphates. This Brevibacillus brevis (strain 47 / JCM 6285 / NBRC 100599) protein is Formamidopyrimidine-DNA glycosylase.